Reading from the N-terminus, the 113-residue chain is Large ribosomal subunit protein bL19 (113 aa).

It belongs to the bacterial ribosomal protein bL19 family.

Functionally, this protein is located at the 30S-50S ribosomal subunit interface and may play a role in the structure and function of the aminoacyl-tRNA binding site. The polypeptide is Large ribosomal subunit protein bL19 (rplS) (Mycobacterium bovis (strain ATCC BAA-935 / AF2122/97)).